Reading from the N-terminus, the 470-residue chain is Ras-like GTPase HI_1637 (470 aa).

Positions 27 to 34 (GLSRSGKT) match the Walker A motif motif. S29, G32, K33, T34, A35, W98, S101, T102, R103, K342, D344, and H345 together coordinate GTP. GDP-binding residues include G32, K33, T34, A35, W98, S101, and T102. The GDP site is built by K342, D344, H345, A383, and V384. Residue V384 participates in GTP binding.

It to E.coli YcjX. Monomer in solution. It depends on Mg(2+) as a cofactor.

It carries out the reaction GTP + H2O = GDP + phosphate + H(+). With respect to regulation, alternates between an inactive form bound to GDP and an active form bound to GTP. Likely activated by a guanine nucleotide-exchange factor (GEF). Binds GTP and GDP. Has intrinsic GTPase activity. Does not hydrolyze ATP. May act as a transducer of stress responses. The sequence is that of Ras-like GTPase HI_1637 from Haemophilus influenzae (strain ATCC 51907 / DSM 11121 / KW20 / Rd).